We begin with the raw amino-acid sequence, 160 residues long: Putative pre-16S rRNA nuclease (160 aa).

Belongs to the YqgF nuclease family.

The protein localises to the cytoplasm. Functionally, could be a nuclease involved in processing of the 5'-end of pre-16S rRNA. The protein is Putative pre-16S rRNA nuclease of Rhodopseudomonas palustris (strain ATCC BAA-98 / CGA009).